The following is a 166-amino-acid chain: MKVYITYGTADFLKTIVQKHPSENILLMQGQENAILIHETNGDTVFQAPHAYEVIDQVGEIKHPGFAVLNNIAVTQEGRPLFENRFKNRAGKVENEPGFEAIRVLRPLDSDTYVILTLWETESAFQDWQQSGSYKEAHKKRDTSAGIDTTSIFSRPSYVTTYFAVE.

Fe cation is bound at residue asparagine 33. The region spanning 66–153 (FAVLNNIAVT…SAGIDTTSIF (88 aa)) is the ABM domain. Histidine 138 contacts heme.

The protein belongs to the antibiotic biosynthesis monooxygenase family. Homodimer.

It is found in the cytoplasm. It catalyses the reaction heme b + 3 reduced [NADPH--hemoprotein reductase] + 3 O2 = biliverdin IXalpha + CO + Fe(2+) + 3 oxidized [NADPH--hemoprotein reductase] + 3 H2O + H(+). Its function is as follows. Catalyzes the oxidative degradation of the heme macrocyclic porphyrin ring in the presence of a suitable electron donor such as ascorbate or NADPH--cytochrome P450 reductase, with subsequent release of free iron. This Bacillus subtilis (strain 168) protein is Heme-degrading monooxygenase HmoB (hmoB).